The chain runs to 179 residues: Large ribosomal subunit protein uL6 (179 aa).

The protein belongs to the universal ribosomal protein uL6 family. In terms of assembly, part of the 50S ribosomal subunit.

Its function is as follows. This protein binds to the 23S rRNA, and is important in its secondary structure. It is located near the subunit interface in the base of the L7/L12 stalk, and near the tRNA binding site of the peptidyltransferase center. The sequence is that of Large ribosomal subunit protein uL6 from Chlorobium phaeovibrioides (strain DSM 265 / 1930) (Prosthecochloris vibrioformis (strain DSM 265)).